The primary structure comprises 405 residues: Deoxyguanosinetriphosphate triphosphohydrolase-like protein (405 aa).

The HD domain occupies 75–219 (RLTHTIEVAQ…AAIADDIAYN (145 aa)).

The protein belongs to the dGTPase family. Type 2 subfamily.

The protein is Deoxyguanosinetriphosphate triphosphohydrolase-like protein of Rhizobium leguminosarum bv. trifolii (strain WSM2304).